We begin with the raw amino-acid sequence, 118 residues long: Holo-[acyl-carrier-protein] synthase (118 aa).

2 residues coordinate Mg(2+): aspartate 8 and glutamate 57.

The protein belongs to the P-Pant transferase superfamily. AcpS family. It depends on Mg(2+) as a cofactor.

Its subcellular location is the cytoplasm. It catalyses the reaction apo-[ACP] + CoA = holo-[ACP] + adenosine 3',5'-bisphosphate + H(+). Functionally, transfers the 4'-phosphopantetheine moiety from coenzyme A to a Ser of acyl-carrier-protein. The sequence is that of Holo-[acyl-carrier-protein] synthase from Acholeplasma laidlawii (strain PG-8A).